Reading from the N-terminus, the 153-residue chain is Small ribosomal subunit protein bS6 (153 aa).

The segment at 94 to 153 is disordered; the sequence is EAHEEGPSAMMQKRDRDDRPRRDGDRPDRGPREDRGPRPPREGGFGDREDRPRRPREDRA.

The protein belongs to the bacterial ribosomal protein bS6 family.

Functionally, binds together with bS18 to 16S ribosomal RNA. The sequence is that of Small ribosomal subunit protein bS6 from Agrobacterium fabrum (strain C58 / ATCC 33970) (Agrobacterium tumefaciens (strain C58)).